The primary structure comprises 816 residues: Molybdenum cofactor sulfurase (816 aa).

Lys-273 is modified (N6-(pyridoxal phosphate)lysine). Cys-427 is an active-site residue. Residues 647 to 812 (NSDSQSHSCI…IRVGEEIIPN (166 aa)) enclose the MOSC domain.

This sequence belongs to the class-V pyridoxal-phosphate-dependent aminotransferase family. MOCOS subfamily. Pyridoxal 5'-phosphate serves as cofactor. As to expression, ubiquitously expressed.

It catalyses the reaction Mo-molybdopterin + L-cysteine + AH2 = thio-Mo-molybdopterin + L-alanine + A + H2O. It functions in the pathway cofactor biosynthesis; molybdopterin biosynthesis. Its function is as follows. Sulfurates the molybdenum cofactor. Sulfation of molybdenum is essential for xanthine dehydrogenase (XDH) and aldehyde oxidase (ADO) enzymes in which molybdenum cofactor is liganded by 1 oxygen and 1 sulfur atom in active form. In Solanum lycopersicum (Tomato), this protein is Molybdenum cofactor sulfurase (FLACCA).